Here is a 279-residue protein sequence, read N- to C-terminus: Proline-rich protein 23D1 (279 aa).

2 disordered regions span residues 1 to 60 and 247 to 270; these read MYGY…PHLN and LRPM…RPPS. The span at 15–33 shows a compositional bias: polar residues; that stretch reads TEPQNDNEGETSLATTQMN.

This sequence belongs to the PRR23 family.

The chain is Proline-rich protein 23D1 (PRR23D1) from Homo sapiens (Human).